A 73-amino-acid chain; its full sequence is uncharacterized protein (73 aa).

The N-terminal stretch at 1–23 (MLHLIKMVSKIVLLITLVFIVSA) is a signal peptide.

This is an uncharacterized protein from Acheta domesticus (House cricket).